The chain runs to 66 residues: Photosystem II reaction center protein J (66 aa).

Residues 1–27 (MSGKKSGLPDGRVPDRNPDGTPAVPWK) are disordered. Residues 37-57 (LWLVATAGGMAVMFVVGLFFY) traverse the membrane as a helical segment.

The protein belongs to the PsbJ family. PSII is composed of 1 copy each of membrane proteins PsbA, PsbB, PsbC, PsbD, PsbE, PsbF, PsbH, PsbI, PsbJ, PsbK, PsbL, PsbM, PsbT, PsbX, PsbY, PsbZ, Psb30/Ycf12, peripheral proteins PsbO, CyanoQ (PsbQ), PsbU, PsbV and a large number of cofactors. It forms dimeric complexes.

The protein resides in the cellular thylakoid membrane. Functionally, one of the components of the core complex of photosystem II (PSII). PSII is a light-driven water:plastoquinone oxidoreductase that uses light energy to abstract electrons from H(2)O, generating O(2) and a proton gradient subsequently used for ATP formation. It consists of a core antenna complex that captures photons, and an electron transfer chain that converts photonic excitation into a charge separation. The sequence is that of Photosystem II reaction center protein J from Synechococcus sp. (strain RCC307).